We begin with the raw amino-acid sequence, 214 residues long: uncharacterized protein (214 aa).

A coiled-coil region spans residues 39-68; the sequence is KLRSKKEVEEKIKEVDRELEEVVNAGVSIN. Residues 99–114 show a composition bias toward basic and acidic residues; sequence EIKVEAPEPDEEKLPD. Residues 99–162 are disordered; sequence EIKVEAPEPD…EEVEFDEEDD (64 aa). Over residues 123–162 the composition is skewed to acidic residues; sequence SDLDMDFEDLGQEIPLDADEQEEEEEEEEVEEVEFDEEDD. Residues 138-212 are a coiled coil; it reads LDADEQEEEE…IQRLKVLSGG (75 aa).

This is an uncharacterized protein from Archaeoglobus fulgidus (strain ATCC 49558 / DSM 4304 / JCM 9628 / NBRC 100126 / VC-16).